The primary structure comprises 692 residues: UvrABC system protein B (692 aa).

The Helicase ATP-binding domain occupies 32-418 (DNIENGEKAQ…QTDTIVEQII (387 aa)). Residue 45–52 (GATGTGKT) coordinates ATP. Residues 98-121 (YYDYYQPEAYVPSSDTYIEKDSSV) carry the Beta-hairpin motif. Positions 436-631 (QIDDLVGEIH…TIKKEIRDLI (196 aa)) constitute a Helicase C-terminal domain. The UVR domain occupies 656 to 691 (KALVKKLEKEMQQAASALDFEGAAQLRDMVLELRAM).

This sequence belongs to the UvrB family. Forms a heterotetramer with UvrA during the search for lesions. Interacts with UvrC in an incision complex.

It is found in the cytoplasm. Functionally, the UvrABC repair system catalyzes the recognition and processing of DNA lesions. A damage recognition complex composed of 2 UvrA and 2 UvrB subunits scans DNA for abnormalities. Upon binding of the UvrA(2)B(2) complex to a putative damaged site, the DNA wraps around one UvrB monomer. DNA wrap is dependent on ATP binding by UvrB and probably causes local melting of the DNA helix, facilitating insertion of UvrB beta-hairpin between the DNA strands. Then UvrB probes one DNA strand for the presence of a lesion. If a lesion is found the UvrA subunits dissociate and the UvrB-DNA preincision complex is formed. This complex is subsequently bound by UvrC and the second UvrB is released. If no lesion is found, the DNA wraps around the other UvrB subunit that will check the other stand for damage. This Lactococcus lactis subsp. lactis (strain IL1403) (Streptococcus lactis) protein is UvrABC system protein B.